The following is a 67-amino-acid chain: uncharacterized protein (67 aa).

The next 2 membrane-spanning stretches (helical) occupy residues 10-30 (EFFI…ITMW) and 40-60 (LMVG…WMVF).

Belongs to the plectrovirus ORF10 family.

It is found in the host membrane. This is an uncharacterized protein from Spiroplasma citri (SpV1).